A 57-amino-acid polypeptide reads, in one-letter code: Large ribosomal subunit protein eL20 (57 aa).

Belongs to the eukaryotic ribosomal protein eL20 family. In terms of assembly, part of the 50S ribosomal subunit. Binds 23S rRNA.

The sequence is that of Large ribosomal subunit protein eL20 from Natronomonas pharaonis (strain ATCC 35678 / DSM 2160 / CIP 103997 / JCM 8858 / NBRC 14720 / NCIMB 2260 / Gabara) (Halobacterium pharaonis).